Here is a 213-residue protein sequence, read N- to C-terminus: uncharacterized protein (213 aa).

S-adenosyl-L-methionine is bound by residues Gly53, Glu74, and Asp97.

This sequence belongs to the methyltransferase superfamily. YrrT family.

In terms of biological role, could be a S-adenosyl-L-methionine-dependent methyltransferase. This is an uncharacterized protein from Bacillus subtilis (strain 168).